Here is a 236-residue protein sequence, read N- to C-terminus: Conserved regulator of innate immunity protein 3 (236 aa).

A mitochondrion-targeting transit peptide spans 1-36 (MNTASLVRSLSRVALRSSQVVRMAAPRHFSQSAKVL).

Belongs to the MAM33 family.

It localises to the mitochondrion matrix. The chain is Conserved regulator of innate immunity protein 3 (cri-3) from Caenorhabditis elegans.